Consider the following 312-residue polypeptide: Olfactory receptor 5P4 (312 aa).

Over 1-25 (METENDTMVTEFIILGLTDSATLRA) the chain is Extracellular. An N-linked (GlcNAc...) asparagine glycan is attached at asparagine 5. The chain crosses the membrane as a helical span at residues 26-46 (ILFVFFLPVYIVTVVGNISII). Over 47–54 (LLIRSSPQ) the chain is Cytoplasmic. The chain crosses the membrane as a helical span at residues 55-75 (LHTPMYLFLSHLAFVDIGYST). Topologically, residues 76 to 99 (SVTPIMLISFLREETTIPLAGCAA) are extracellular. An intrachain disulfide couples cysteine 97 to cysteine 189. Residues 100 to 120 (QLGSDVAFGTTECFLLATMAY) traverse the membrane as a helical segment. Over 121–133 (DRYVAICSPLLYS) the chain is Cytoplasmic. A helical transmembrane segment spans residues 134–154 (TQMSPAICCFLLGASYLGGCM). Over 155 to 196 (NASSFTGCFVNLNFCGPNKVNHFFCDLFPLVKLSCGHAYIAE) the chain is Extracellular. A helical membrane pass occupies residues 197–217 (ISPSISSASVLVSTLSTIIVS). Topologically, residues 218–237 (YIYILHSILRMRSAEGRNKA) are cytoplasmic. Residues 238–258 (FSTCTSHLTAVTLFYGTVLFV) traverse the membrane as a helical segment. Residues 259–271 (YVMPKSSYSADQV) are Extracellular-facing. The helical transmembrane segment at 272 to 292 (KVASVVYTVVIPMLNPLIYSL) threads the bilayer. The Cytoplasmic portion of the chain corresponds to 293–312 (RNKEVKEAMKKLMARTHWFP).

It belongs to the G-protein coupled receptor 1 family.

It localises to the cell membrane. Potential odorant receptor. The chain is Olfactory receptor 5P4 from Mus musculus (Mouse).